The chain runs to 153 residues: UPF0756 membrane protein BA_4840/GBAA_4840/BAS4489 (153 aa).

Transmembrane regions (helical) follow at residues phenylalanine 8–isoleucine 28, leucine 54–phenylalanine 74, tryptophan 87–leucine 107, and leucine 117–isoleucine 137.

The protein belongs to the UPF0756 family.

It localises to the cell membrane. In Bacillus anthracis, this protein is UPF0756 membrane protein BA_4840/GBAA_4840/BAS4489.